We begin with the raw amino-acid sequence, 365 residues long: tRNA(Met) cytidine acetate ligase (365 aa).

Residues 7-20 (IAEF…HKYL), G96, N152, and R175 contribute to the ATP site.

The protein belongs to the TmcAL family.

It localises to the cytoplasm. It carries out the reaction cytidine(34) in elongator tRNA(Met) + acetate + ATP = N(4)-acetylcytidine(34) in elongator tRNA(Met) + AMP + diphosphate. Its function is as follows. Catalyzes the formation of N(4)-acetylcytidine (ac(4)C) at the wobble position of elongator tRNA(Met), using acetate and ATP as substrates. First activates an acetate ion to form acetyladenylate (Ac-AMP) and then transfers the acetyl group to tRNA to form ac(4)C34. This is tRNA(Met) cytidine acetate ligase from Streptococcus pneumoniae serotype 4 (strain ATCC BAA-334 / TIGR4).